Here is a 145-residue protein sequence, read N- to C-terminus: 3-hydroxyacyl-[acyl-carrier-protein] dehydratase FabZ (145 aa).

Residue His-50 is part of the active site.

Belongs to the thioester dehydratase family. FabZ subfamily.

It is found in the cytoplasm. It catalyses the reaction a (3R)-hydroxyacyl-[ACP] = a (2E)-enoyl-[ACP] + H2O. Its function is as follows. Involved in unsaturated fatty acids biosynthesis. Catalyzes the dehydration of short chain beta-hydroxyacyl-ACPs and long chain saturated and unsaturated beta-hydroxyacyl-ACPs. This Coxiella burnetii (strain CbuK_Q154) (Coxiella burnetii (strain Q154)) protein is 3-hydroxyacyl-[acyl-carrier-protein] dehydratase FabZ.